The following is a 961-amino-acid chain: Ras-interacting protein 1 (961 aa).

A compositionally biased stretch (basic and acidic residues) spans 1 to 10; sequence MLSGERKEGG. Disordered regions lie at residues 1-21, 35-70, and 96-116; these read MLSG…HLPV, LGRR…PHVE, and RGSG…QRWA. The span at 41–57 shows a compositional bias: low complexity; the sequence is SAASVKSSSSDTGSRSS. The span at 59–68 shows a compositional bias: pro residues; that stretch reads PLPPPPPPPH. Arg-96 is subject to Omega-N-methylarginine. Over residues 98–110 the composition is skewed to gly residues; sequence SGAGGAGGPGTPG. The Ras-associating domain maps to 141–253; sequence PPGVLKIFAS…RRFELRGREE (113 aa). Residues 261-352 form a disordered region; sequence AFGAADADGT…MAPGAADAQM (92 aa). Phosphoserine is present on residues Ser-274 and Ser-286. The segment covering 284-295 has biased composition (low complexity); the sequence is AASGGAALASPG. Positions 296-307 are enriched in gly residues; sequence PGSGSGTPTGSG. The segment covering 314 to 327 has biased composition (low complexity); it reads NLSLRRSVSELSLQ. Phosphoserine is present on residues Ser-320, Ser-322, Ser-325, and Ser-413. The Dilute domain maps to 594–895; the sequence is GRLARLIKEA…PPAERDAVDT (302 aa).

In terms of assembly, interacts with Ras family members that have been activated by GTP binding. Interacts with HRAS, RAP1A, RAP2, RRAS, RAF1 and RRAS2. Interacts with MYH9 and ARHGAP29. In terms of tissue distribution, detected in kidney, heart, skeletal muscle, small intestine and lung.

It localises to the cytoplasm. Its subcellular location is the perinuclear region. The protein resides in the golgi apparatus. The protein localises to the golgi stack. Functionally, required for the proper formation of vascular structures that develop via both vasculogenesis and angiogenesis. Acts as a critical and vascular-specific regulator of GTPase signaling, cell architecture, and adhesion, which is essential for endothelial cell morphogenesis and blood vessel tubulogenesis. Regulates the activity of Rho GTPases in part by recruiting ARHGAP29 and suppressing RhoA signaling and dampening ROCK and MYH9 activities in endothelial cells. May act as effector for Golgi-bound HRAS and other Ras-like proteins. May promote HRAS-mediated transformation. Negative regulator of amino acid starvation-induced autophagy. In Mus musculus (Mouse), this protein is Ras-interacting protein 1 (Rasip1).